The sequence spans 147 residues: Large ribosomal subunit protein uL15 (147 aa).

Positions 1-58 are disordered; the sequence is MKLHELKPAQGSTKAPKRLGRGIGSGTGKTSGKGHKGQKARAGGGVRPGFEGGQQPLA. Composition is skewed to gly residues over residues 21 to 31 and 42 to 52; these read RGIGSGTGKTS and AGGGVRPGFEG.

Belongs to the universal ribosomal protein uL15 family. Part of the 50S ribosomal subunit.

Binds to the 23S rRNA. This is Large ribosomal subunit protein uL15 from Desulfitobacterium hafniense (strain Y51).